A 645-amino-acid chain; its full sequence is Envelope glycoprotein (645 aa).

An N-terminal signal peptide occupies residues 1–36 (MEGPTHPKPFKDKTFSWDLIILVGVVRVLLRLDVGM). At 37–589 (ANPSPHQVYN…FNKSPWFTTL (553 aa)) the chain is on the extracellular side. N-linked (GlcNAc...) asparagine; by host glycans are attached at residues N46 and N61. 2 disulfides stabilise this stretch: C128-C150 and C142-C155. A disordered region spans residues 238–283 (QAMGPNLVLPEQKPPSRQSQTKSKVATQKPQTNGTTPRSVAPATMS). A compositionally biased stretch (polar residues) spans 252-275 (PSRQSQTKSKVATQKPQTNGTTPR). N-linked (GlcNAc...) asparagine; by host glycans are attached at residues N270, N305, and N310. 3 cysteine pairs are disulfide-bonded: C315–C318, C315–C542, and C534–C541. Residues 315–318 (CWLC) carry the CXXC motif. 5 N-linked (GlcNAc...) asparagine; by host glycosylation sites follow: N334, N337, N377, N393, and N413. The segment at 451-471 (ISLTVALMLGGLTVGGIAAGV) is fusion peptide. 2 coiled-coil regions span residues 479–528 (LETA…ILFL) and 538–574 (KEEC…SQQG). The segment at 517-533 (LQNRRGLDILFLQGGGL) is immunosuppression. The CX6CC motif lies at 534 to 542 (CAALKEECC). Residues 590-610 (ISSIMGPLLILLLILLFGPCI) form a helical membrane-spanning segment. The S-palmitoyl cysteine; by host moiety is linked to residue C609. Over 611–645 (LNRLVQFVKDRISVVQALILTQQYQQIQQYDPDRP) the chain is Cytoplasmic.

The mature envelope protein (Env) consists of a trimer of SU-TM heterodimers attached by a labile interchain disulfide bond. In terms of processing, specific enzymatic cleavages in vivo yield mature proteins. Envelope glycoproteins are synthesized as an inactive precursor that is N-glycosylated and processed likely by host cell furin or by a furin-like protease in the Golgi to yield the mature SU and TM proteins. The cleavage site between SU and TM requires the minimal sequence [KR]-X-[KR]-R. The R-peptide is released from the C-terminus of the cytoplasmic tail of the TM protein upon particle formation as a result of proteolytic cleavage by the viral protease. Cleavage of this peptide is required for TM to become fusogenic. The CXXC motif is highly conserved across a broad range of retroviral envelope proteins. It is thought to participate in the formation of a labile disulfide bond possibly with the CX6CC motif present in the transmembrane protein. Isomerization of the intersubunit disulfide bond to an SU intrachain disulfide bond is thought to occur upon receptor recognition in order to allow membrane fusion. Post-translationally, the transmembrane protein is palmitoylated. In terms of processing, the R-peptide is palmitoylated.

It is found in the virion membrane. The protein localises to the host cell membrane. The surface protein (SU) attaches the virus to the host cell by binding to its receptor. This interaction triggers the refolding of the transmembrane protein (TM) and is thought to activate its fusogenic potential by unmasking its fusion peptide. Fusion occurs at the host cell plasma membrane. In terms of biological role, the transmembrane protein (TM) acts as a class I viral fusion protein. Under the current model, the protein has at least 3 conformational states: pre-fusion native state, pre-hairpin intermediate state, and post-fusion hairpin state. During viral and target cell membrane fusion, the coiled coil regions (heptad repeats) assume a trimer-of-hairpins structure, positioning the fusion peptide in close proximity to the C-terminal region of the ectodomain. The formation of this structure appears to drive apposition and subsequent fusion of viral and target cell membranes. Membranes fusion leads to delivery of the nucleocapsid into the cytoplasm. The protein is Envelope glycoprotein (env) of Feline sarcoma virus (strain SM) (Sm-FeSV).